A 171-amino-acid chain; its full sequence is Ribosome maturation factor RimM (171 aa).

One can recognise a PRC barrel domain in the interval 96 to 170 (AEGEYYYHEI…LVTIHVMEGL (75 aa)).

It belongs to the RimM family. As to quaternary structure, binds ribosomal protein uS19.

The protein resides in the cytoplasm. In terms of biological role, an accessory protein needed during the final step in the assembly of 30S ribosomal subunit, possibly for assembly of the head region. Essential for efficient processing of 16S rRNA. May be needed both before and after RbfA during the maturation of 16S rRNA. It has affinity for free ribosomal 30S subunits but not for 70S ribosomes. This is Ribosome maturation factor RimM from Bacillus cereus (strain G9842).